The primary structure comprises 361 residues: Glutaminyl-peptide cyclotransferase (361 aa).

The first 28 residues, 1 to 28 (MAGGRHRRVVGTLHLLLLVAALPWASRG), serve as a signal peptide directing secretion. N-linked (GlcNAc...) asparagine glycosylation is present at Asn-49. Cys-139 and Cys-164 are disulfide-bonded. Asp-159 serves as a coordination point for Zn(2+). Glu-201 (proton acceptor) is an active-site residue. Residue Glu-202 participates in Zn(2+) binding. The active-site Proton acceptor is Asp-248. The N-linked (GlcNAc...) asparagine glycan is linked to Asn-296. His-330 serves as a coordination point for Zn(2+).

This sequence belongs to the glutaminyl-peptide cyclotransferase family.

The protein resides in the secreted. It catalyses the reaction N-terminal L-glutaminyl-[peptide] = N-terminal 5-oxo-L-prolyl-[peptide] + NH4(+). Functionally, responsible for the biosynthesis of pyroglutamyl peptides. Has a bias against acidic and tryptophan residues adjacent to the N-terminal glutaminyl residue and a lack of importance of chain length after the second residue. Also catalyzes N-terminal pyroglutamate formation. In vitro, catalyzes pyroglutamate formation of N-terminally truncated form of APP amyloid-beta peptides [Glu-3]-amyloid-beta. May be involved in the N-terminal pyroglutamate formation of several amyloid-related plaque-forming peptides. The chain is Glutaminyl-peptide cyclotransferase (QPCT) from Homo sapiens (Human).